A 262-amino-acid polypeptide reads, in one-letter code: Indole-3-glycerol phosphate synthase (262 aa).

It belongs to the TrpC family.

It carries out the reaction 1-(2-carboxyphenylamino)-1-deoxy-D-ribulose 5-phosphate + H(+) = (1S,2R)-1-C-(indol-3-yl)glycerol 3-phosphate + CO2 + H2O. The protein operates within amino-acid biosynthesis; L-tryptophan biosynthesis; L-tryptophan from chorismate: step 4/5. This Nitratiruptor sp. (strain SB155-2) protein is Indole-3-glycerol phosphate synthase.